The sequence spans 950 residues: A disintegrin and metalloproteinase with thrombospondin motifs 15 (950 aa).

Positions 1 to 17 (MLLLGILTLAFAGRTAG) are cleaved as a signal peptide. Positions 18 to 212 (GSEPEREVVV…SRRRSGRAKR (195 aa)) are excised as a propeptide. Asn-141 carries N-linked (GlcNAc...) asparagine glycosylation. The disordered stretch occupies residues 151–172 (SQGAHLLQRRGVPGGPSGDPTS). Residues 172–179 (SRCGVASG) carry the Cysteine switch motif. Residue Cys-174 coordinates Zn(2+). One can recognise a Peptidase M12B domain in the interval 218–427 (RYVETLVVAD…GHGDCLLDQP (210 aa)). 11 cysteine pairs are disulfide-bonded: Cys-293–Cys-345, Cys-322–Cys-327, Cys-339–Cys-422, Cys-377–Cys-406, Cys-448–Cys-470, Cys-459–Cys-480, Cys-465–Cys-499, Cys-493–Cys-504, Cys-528–Cys-565, Cys-532–Cys-570, and Cys-543–Cys-555. A Zn(2+)-binding site is contributed by His-361. Glu-362 is an active-site residue. Positions 365 and 371 each coordinate Zn(2+). Residues 428–515 (SKPISLPEDL…ERHNLNKHRV (88 aa)) form the Disintegrin domain. Residues 516-571 (DGSWAKWDPYGPCSRTCGGGVQLARRQCTNPTPANGGKYCEGVRVKYRSCNLEPCP) enclose the TSP type-1 1 domain. Residues Asn-591, Asn-623, and Asn-679 are each glycosylated (N-linked (GlcNAc...) asparagine). A spacer region spans residues 701–838 (AIPAGASSID…SNQVEQPDDR (138 aa)). The interval 798–822 (FYLPKEPREDKSSHPKDPRGPSVLH) is disordered. The segment covering 802–816 (KEPREDKSSHPKDPR) has biased composition (basic and acidic residues). TSP type-1 domains lie at 839–895 (PPAR…EPCP) and 896–949 (TWEL…VLRP).

Requires Zn(2+) as cofactor. In terms of processing, the precursor is cleaved by a furin endopeptidase. Post-translationally, glycosylated. Can be O-fucosylated by POFUT2 on a serine or a threonine residue found within the consensus sequence C1-X(2)-(S/T)-C2-G of the TSP type-1 repeat domains where C1 and C2 are the first and second cysteine residue of the repeat, respectively. Fucosylated repeats can then be further glycosylated by the addition of a beta-1,3-glucose residue by the glucosyltransferase, B3GALTL. Fucosylation mediates the efficient secretion of ADAMTS family members. Can be C-glycosylated with one or two mannose molecules on tryptophan residues within the consensus sequence W-X-X-W of the TPRs. Also N-glycosylated. These other glycosylations can also facilitate secretion. In terms of tissue distribution, expressed in fetal liver and kidney, but not in any of the adult tissues examined.

The protein localises to the secreted. It localises to the extracellular space. Its subcellular location is the extracellular matrix. It is found in the cell surface. Metalloprotease which has proteolytic activity against the proteoglycan VCAN, cleaving it at the 'Glu-1428-|-1429-Ala' site. Cleaves VCAN in the pericellular matrix surrounding myoblasts, facilitating myoblast contact and fusion which is required for skeletal muscle development and regeneration. The polypeptide is A disintegrin and metalloproteinase with thrombospondin motifs 15 (ADAMTS15) (Homo sapiens (Human)).